Reading from the N-terminus, the 423-residue chain is Torsin-4A (423 aa).

The segment at 47–68 (PGGGPDVGTGAPRPGCSPRAPR) is disordered. S63 and S81 each carry phosphoserine. The residue at position 89 (T89) is a Phosphothreonine. S106 is subject to Phosphoserine. Residues 122–138 (CLLLLVAIVGFQVLNAI) form a helical membrane-spanning segment. Residue 194–201 (GPSGVGKS) participates in ATP binding.

It belongs to the ClpA/ClpB family. Torsin subfamily.

It is found in the membrane. The chain is Torsin-4A (TOR4A) from Homo sapiens (Human).